The following is a 169-amino-acid chain: Crossover junction endodeoxyribonuclease RuvC (169 aa).

Catalysis depends on residues aspartate 11, glutamate 71, and aspartate 143. Positions 11, 71, and 143 each coordinate Mg(2+).

Belongs to the RuvC family. Homodimer which binds Holliday junction (HJ) DNA. The HJ becomes 2-fold symmetrical on binding to RuvC with unstacked arms; it has a different conformation from HJ DNA in complex with RuvA. In the full resolvosome a probable DNA-RuvA(4)-RuvB(12)-RuvC(2) complex forms which resolves the HJ. It depends on Mg(2+) as a cofactor.

It localises to the cytoplasm. It catalyses the reaction Endonucleolytic cleavage at a junction such as a reciprocal single-stranded crossover between two homologous DNA duplexes (Holliday junction).. The RuvA-RuvB-RuvC complex processes Holliday junction (HJ) DNA during genetic recombination and DNA repair. Endonuclease that resolves HJ intermediates. Cleaves cruciform DNA by making single-stranded nicks across the HJ at symmetrical positions within the homologous arms, yielding a 5'-phosphate and a 3'-hydroxyl group; requires a central core of homology in the junction. The consensus cleavage sequence is 5'-(A/T)TT(C/G)-3'. Cleavage occurs on the 3'-side of the TT dinucleotide at the point of strand exchange. HJ branch migration catalyzed by RuvA-RuvB allows RuvC to scan DNA until it finds its consensus sequence, where it cleaves and resolves the cruciform DNA. In Bartonella henselae (strain ATCC 49882 / DSM 28221 / CCUG 30454 / Houston 1) (Rochalimaea henselae), this protein is Crossover junction endodeoxyribonuclease RuvC.